We begin with the raw amino-acid sequence, 193 residues long: uncharacterized protein (193 aa).

This is an uncharacterized protein from Dictyostelium discoideum (Social amoeba).